Reading from the N-terminus, the 377-residue chain is Adaptive-response sensory kinase SasA (377 aa).

The 220-residue stretch at 154–373 (MLVHDLRSPL…SFHFTLPVYR (220 aa)) folds into the Histidine kinase domain. His-157 is subject to Phosphohistidine; by autocatalysis.

In terms of assembly, homooligomerizes. Interacts with KaiC. Participates in the KaiABC clock complex, whose core is composed of a KaiC homohexamer, 6 KaiB and up to 6 KaiA dimers. SasA and KaiB(fs) compete to bind to KaiC.

It carries out the reaction ATP + protein L-histidine = ADP + protein N-phospho-L-histidine.. Functionally, member of the two-component regulatory system SasA/RpaA involved in genome-wide circadian gene expression. One of several clock output pathways. Participates in the Kai clock protein complex, the main circadian regulator in cyanobacteria, via its interaction with KaiC. KaiC enhances the autophosphorylation activity of SasA, which then transfers its phosphate group to RpaA to activate it. In addition to its output function, recruits fold-shifted KaiB (KaiB(fs)) to KaiC to cooperatively form the KaiB(6):KaiC(6) complex (independent of SasA kinase activity). Required for robustness of the circadian rhythm of gene expression and is involved in clock output, also required for adaptation to light/dark cycles. The chain is Adaptive-response sensory kinase SasA from Synechococcus sp. (strain JA-2-3B'a(2-13)) (Cyanobacteria bacterium Yellowstone B-Prime).